The chain runs to 68 residues: Large ribosomal subunit protein uL29 (68 aa).

The protein belongs to the universal ribosomal protein uL29 family.

The protein is Large ribosomal subunit protein uL29 of Finegoldia magna (strain ATCC 29328 / DSM 20472 / WAL 2508) (Peptostreptococcus magnus).